The following is a 1357-amino-acid chain: DNA-directed RNA polymerase subunit beta (1357 aa).

This sequence belongs to the RNA polymerase beta chain family. The RNAP catalytic core consists of 2 alpha, 1 beta, 1 beta' and 1 omega subunit. When a sigma factor is associated with the core the holoenzyme is formed, which can initiate transcription.

The catalysed reaction is RNA(n) + a ribonucleoside 5'-triphosphate = RNA(n+1) + diphosphate. In terms of biological role, DNA-dependent RNA polymerase catalyzes the transcription of DNA into RNA using the four ribonucleoside triphosphates as substrates. The sequence is that of DNA-directed RNA polymerase subunit beta from Pseudomonas aeruginosa (strain LESB58).